The following is a 642-amino-acid chain: Threonine--tRNA ligase (642 aa).

Positions 1–61 constitute a TGS domain; sequence MPIITLPDGS…TEDAELQLIT (61 aa). Residues 242–535 form a catalytic region; that stretch reads DHRKLGKSLD…LVEHYEGKFP (294 aa). Zn(2+) contacts are provided by Cys-333, His-384, and His-512.

This sequence belongs to the class-II aminoacyl-tRNA synthetase family. Homodimer. Zn(2+) serves as cofactor.

Its subcellular location is the cytoplasm. It catalyses the reaction tRNA(Thr) + L-threonine + ATP = L-threonyl-tRNA(Thr) + AMP + diphosphate + H(+). In terms of biological role, catalyzes the attachment of threonine to tRNA(Thr) in a two-step reaction: L-threonine is first activated by ATP to form Thr-AMP and then transferred to the acceptor end of tRNA(Thr). Also edits incorrectly charged L-seryl-tRNA(Thr). The sequence is that of Threonine--tRNA ligase from Hydrogenovibrio crunogenus (strain DSM 25203 / XCL-2) (Thiomicrospira crunogena).